The following is a 229-amino-acid chain: Nectarin-1 (229 aa).

Positions 1 to 32 are cleaved as a signal peptide; the sequence is MAAFGINSKIFQSMEMAILFLLAISIDRYCFA. Cys-42 and Cys-57 are disulfide-bonded. N-linked (GlcNAc...) asparagine glycosylation is present at Asn-60. Positions 69–217 constitute a Cupin type-1 domain; it reads LAISKPGATN…TFQINTEDVQ (149 aa). Positions 117, 119, 124, and 163 each coordinate Mn(2+).

Monomer. In the absence of manganese, it forms tetrameric and pentameric forms which show superoxide dismutase activity. Requires Mn(2+) as cofactor. As to expression, nectary tissues and to a lower level ovary. Not detected in petals, stems, leaves, roots or other floral tissues.

The protein localises to the secreted. Its subcellular location is the extracellular space. It is found in the apoplast. It catalyses the reaction 2 superoxide + 2 H(+) = H2O2 + O2. Functionally, may interact with bacterial adhesins thereby protecting the reproductive tissues from microbial attack. Has no oxalate oxidase activity. The polypeptide is Nectarin-1 (NECI) (Nicotiana langsdorffii x Nicotiana sanderae (Ornamental tobacco)).